The sequence spans 553 residues: Probable glucomannan 4-beta-mannosyltransferase 1 (553 aa).

Residues 64–84 traverse the membrane as a helical segment; sequence LLPVFKGLVVMCLVLSIIVFF. D163 is an active-site residue. Positions 222 and 224 each coordinate substrate. D316 is a catalytic residue. 4 helical membrane-spanning segments follow: residues 395–415, 431–451, 510–530, and 531–551; these read VAVHFLTFFFYCIIVPTSVFF, LISIFHTLATPRSFYLVIFWV, EVMVGVYILGCALYGLIYGHT, and WLHFYLFLQATAFFVSGFGFV.

The protein belongs to the glycosyltransferase 2 family. Plant cellulose synthase-like A subfamily.

It localises to the golgi apparatus membrane. The enzyme catalyses GDP-mannose + (glucomannan)n = GDP + (glucomannan)n+1.. In terms of biological role, probable mannan synthase which consists of a 4-beta-mannosyltransferase activity on mannan using GDP-mannose. The beta-1,4-mannan product is the backbone for galactomannan synthesis by galactomannan galactosyltransferase. Galactomannan is a noncellulosic polysaccharides of plant cell wall. In Arabidopsis thaliana (Mouse-ear cress), this protein is Probable glucomannan 4-beta-mannosyltransferase 1.